We begin with the raw amino-acid sequence, 896 residues long: Translation initiation factor IF-2 (896 aa).

The interval 1–260 (MDIENTNKPD…AQTNKKAHKA (260 aa)) is disordered. The span at 19-34 (KAADSKPESGKTDSKR) shows a compositional bias: basic and acidic residues. Over residues 56–66 (EESSGGKASGK) the composition is skewed to low complexity. Positions 85–136 (SVKEKKPDERLEETKKTAPRFEDKKSDAPSAQNEKRSFDSAKKEEKQTERKK) are enriched in basic and acidic residues. Positions 168–177 (RGQGNRPQRP) are enriched in low complexity. The region spanning 375 to 544 (PRPPVVTIMG…LLQAEVLELK (170 aa)) is the tr-type G domain. Residues 384-391 (GHVDHGKT) are G1. Residue 384–391 (GHVDHGKT) participates in GTP binding. A G2 region spans residues 409–413 (GITQH). The tract at residues 430-433 (DTPG) is G3. GTP is bound by residues 430 to 434 (DTPGH) and 484 to 487 (NKVD). The tract at residues 484-487 (NKVD) is G4. Residues 520-522 (SAL) are G5. A disordered region spans residues 877 to 896 (SDSEKYKAPEIKEEGTETDE).

Belongs to the TRAFAC class translation factor GTPase superfamily. Classic translation factor GTPase family. IF-2 subfamily.

The protein localises to the cytoplasm. Its function is as follows. One of the essential components for the initiation of protein synthesis. Protects formylmethionyl-tRNA from spontaneous hydrolysis and promotes its binding to the 30S ribosomal subunits. Also involved in the hydrolysis of GTP during the formation of the 70S ribosomal complex. In Treponema denticola (strain ATCC 35405 / DSM 14222 / CIP 103919 / JCM 8153 / KCTC 15104), this protein is Translation initiation factor IF-2.